Reading from the N-terminus, the 177-residue chain is Coatomer subunit zeta-1 (177 aa).

The protein belongs to the adaptor complexes small subunit family. As to quaternary structure, oligomeric complex that consists of at least the alpha, beta, beta', gamma, delta, epsilon and zeta subunits.

Its subcellular location is the cytoplasm. The protein resides in the golgi apparatus membrane. It is found in the cytoplasmic vesicle. It localises to the COPI-coated vesicle membrane. The coatomer is a cytosolic protein complex that binds to dilysine motifs and reversibly associates with Golgi non-clathrin-coated vesicles, which further mediate biosynthetic protein transport from the ER, via the Golgi up to the trans Golgi network. Coatomer complex is required for budding from Golgi membranes, and is essential for the retrograde Golgi-to-ER transport of dilysine-tagged proteins. The zeta subunit may be involved in regulating the coat assembly and, hence, the rate of biosynthetic protein transport due to its association-dissociation properties with the coatomer complex. In Oryza sativa subsp. japonica (Rice), this protein is Coatomer subunit zeta-1 (COPZ1).